Here is a 446-residue protein sequence, read N- to C-terminus: Putative diacyglycerol O-acyltransferase Rv3371 (446 aa).

Histidine 129 (proton acceptor) is an active-site residue. The segment at 425–446 is disordered; that stretch reads SRALPSAARRGRPSVPTARARH.

The protein belongs to the long-chain O-acyltransferase family.

The enzyme catalyses an acyl-CoA + a 1,2-diacyl-sn-glycerol = a triacyl-sn-glycerol + CoA. It catalyses the reaction di-(9Z)-octadecenoylglycerol + (9Z)-octadecenoyl-CoA = 1,2,3-tri-(9Z-octadecenoyl)-glycerol + CoA. Its pathway is glycerolipid metabolism; triacylglycerol biosynthesis. Catalyzes the terminal and only committed step in triacylglycerol synthesis by using diacylglycerol and fatty acyl CoA as substrates. Required for storage lipid synthesis. Functionally, upon expression in E.coli functions weakly as a triacylglycerol synthase, making triacylglycerol (TG) from diolein and long-chain fatty acyl-CoA. Has no wax synthase activity to produce wax esters. The polypeptide is Putative diacyglycerol O-acyltransferase Rv3371 (Mycobacterium tuberculosis (strain ATCC 25618 / H37Rv)).